A 312-amino-acid polypeptide reads, in one-letter code: Serine/threonine-protein phosphatase PP1 isozyme 5 (312 aa).

Alanine 2 is subject to N-acetylalanine. 4 residues coordinate Mn(2+): aspartate 70, histidine 72, aspartate 98, and asparagine 130. The Proton donor role is filled by histidine 131. Mn(2+)-binding residues include histidine 179 and histidine 254.

Belongs to the PPP phosphatase family. PP-1 subfamily. Mn(2+) is required as a cofactor.

Its subcellular location is the nucleus. The protein localises to the cytoplasm. The catalysed reaction is O-phospho-L-seryl-[protein] + H2O = L-seryl-[protein] + phosphate. It catalyses the reaction O-phospho-L-threonyl-[protein] + H2O = L-threonyl-[protein] + phosphate. With respect to regulation, phosphatase activity is strongly reduced by the protein phosphatase inhibitor 2 (I-2). Functionally, serine/threonine-protein phosphatase that possesses phosphatase activity toward para-nitrophenyl phosphate (pNPP) in vitro. This is Serine/threonine-protein phosphatase PP1 isozyme 5 from Arabidopsis thaliana (Mouse-ear cress).